We begin with the raw amino-acid sequence, 183 residues long: Ribosome-recycling factor (183 aa).

Belongs to the RRF family.

The protein resides in the cytoplasm. In terms of biological role, responsible for the release of ribosomes from messenger RNA at the termination of protein biosynthesis. May increase the efficiency of translation by recycling ribosomes from one round of translation to another. This chain is Ribosome-recycling factor, found in Acetivibrio thermocellus (strain ATCC 27405 / DSM 1237 / JCM 9322 / NBRC 103400 / NCIMB 10682 / NRRL B-4536 / VPI 7372) (Clostridium thermocellum).